The following is an 800-amino-acid chain: Cation/H(+) antiporter 19 (800 aa).

The next 12 helical transmembrane spans lie at 30-50 (FALP…RLLA), 60-77 (RVIA…SALG), 92-112 (LTVL…LVGL), 127-147 (LLIA…TSFV), 158-178 (QLPF…PVLA), 196-216 (MSAA…AIAL), 224-244 (LVSV…VVAI), 278-298 (FVTD…GIVA), 315-335 (LVSG…TDVT), 343-363 (WGLL…GTVG), 375-395 (AVTL…VLNI), and 408-428 (AILV…VMLI). A disordered region spans residues 776 to 800 (ADTRPLVEEDAEYDQSSRDISDLTA). Positions 790 to 800 (QSSRDISDLTA) are enriched in basic and acidic residues.

The protein belongs to the monovalent cation:proton antiporter 2 (CPA2) transporter (TC 2.A.37) family. CHX (TC 2.A.37.4) subfamily. In terms of tissue distribution, expressed in the whole plant but preferentially in pollen.

It localises to the membrane. May operate as a cation/H(+) antiporter. The sequence is that of Cation/H(+) antiporter 19 (CHX19) from Arabidopsis thaliana (Mouse-ear cress).